A 958-amino-acid chain; its full sequence is UPF0182 protein TW644 (958 aa).

A run of 7 helical transmembrane segments spans residues 14–34, 59–79, 107–127, 166–186, 205–225, 249–269, and 280–300; these read IAIL…FFLV, IFVV…LCMF, KIVV…FAAS, LFFL…ISVV, VQYA…FWLN, LIPG…LFCI, and IIGV…LPWG.

This sequence belongs to the UPF0182 family.

Its subcellular location is the cell membrane. This Tropheryma whipplei (strain TW08/27) (Whipple's bacillus) protein is UPF0182 protein TW644.